Reading from the N-terminus, the 47-residue chain is Potassium channel toxin gamma-KTx 5.2 (47 aa).

Intrachain disulfides connect Cys-5–Cys-23, Cys-11–Cys-34, Cys-20–Cys-39, and Cys-24–Cys-41.

This sequence belongs to the ergtoxin family. Gamma-KTx 5 subfamily. As to expression, expressed by the venom gland.

It is found in the secreted. Functionally, reversibly blocks Kv11/ERG potassium channels. This Centruroides gracilis (Slenderbrown scorpion) protein is Potassium channel toxin gamma-KTx 5.2.